Reading from the N-terminus, the 74-residue chain is Exodeoxyribonuclease 7 small subunit (74 aa).

The protein belongs to the XseB family. Heterooligomer composed of large and small subunits.

It is found in the cytoplasm. The enzyme catalyses Exonucleolytic cleavage in either 5'- to 3'- or 3'- to 5'-direction to yield nucleoside 5'-phosphates.. Functionally, bidirectionally degrades single-stranded DNA into large acid-insoluble oligonucleotides, which are then degraded further into small acid-soluble oligonucleotides. The polypeptide is Exodeoxyribonuclease 7 small subunit (Symbiobacterium thermophilum (strain DSM 24528 / JCM 14929 / IAM 14863 / T)).